The following is a 149-amino-acid chain: UPF0260 protein PA1299 (149 aa).

The protein belongs to the UPF0260 family.

This Pseudomonas aeruginosa (strain ATCC 15692 / DSM 22644 / CIP 104116 / JCM 14847 / LMG 12228 / 1C / PRS 101 / PAO1) protein is UPF0260 protein PA1299.